The chain runs to 365 residues: sn-glycerol-3-phosphate import ATP-binding protein UgpC (365 aa).

The region spanning 4-234 is the ABC transporter domain; it reads LSLRNVQKHY…PASTFVAGFI (231 aa). 36–43 lines the ATP pocket; sequence GPSGCGKS.

The protein belongs to the ABC transporter superfamily. sn-glycerol-3-phosphate importer (TC 3.A.1.1.3) family. The complex is composed of two ATP-binding proteins (UgpC), two transmembrane proteins (UgpA and UgpE) and a solute-binding protein (UgpB).

It is found in the cell inner membrane. It carries out the reaction sn-glycerol 3-phosphate(out) + ATP + H2O = sn-glycerol 3-phosphate(in) + ADP + phosphate + H(+). Functionally, part of the ABC transporter complex UgpBAEC involved in sn-glycerol-3-phosphate (G3P) import. Responsible for energy coupling to the transport system. The polypeptide is sn-glycerol-3-phosphate import ATP-binding protein UgpC (Ralstonia nicotianae (strain ATCC BAA-1114 / GMI1000) (Ralstonia solanacearum)).